The sequence spans 209 residues: MADSKEIKRVLLGPLFDNNPIALQVLGVCSALAVTTKLETAVVMTIAVTLVTAFSSFFISLIRHHIPNSVRIIVQMAIIASLVIVVDQLLRAYAFEISKQLSVFVGLIITNCIVMGRAEAYAMKSPPIESFMDGIGNGLGYGVILVLVGFLRELFGSGKLFGIPVLETVQNGGWYQPNGLFLLAPSAFFIIGLLIWALRSLKPAQIEKE.

The next 5 membrane-spanning stretches (helical) occupy residues 42–62 (VVMTIAVTLVTAFSSFFISLI), 66–86 (IPNSVRIIVQMAIIASLVIVV), 95–115 (FEISKQLSVFVGLIITNCIVM), 131–151 (FMDGIGNGLGYGVILVLVGFL), and 178–198 (NGLFLLAPSAFFIIGLLIWAL).

This sequence belongs to the NqrDE/RnfAE family. Composed of six subunits; NqrA, NqrB, NqrC, NqrD, NqrE and NqrF.

The protein resides in the cell inner membrane. The catalysed reaction is a ubiquinone + n Na(+)(in) + NADH + H(+) = a ubiquinol + n Na(+)(out) + NAD(+). Functionally, NQR complex catalyzes the reduction of ubiquinone-1 to ubiquinol by two successive reactions, coupled with the transport of Na(+) ions from the cytoplasm to the periplasm. NqrA to NqrE are probably involved in the second step, the conversion of ubisemiquinone to ubiquinol. In Serratia proteamaculans (strain 568), this protein is Na(+)-translocating NADH-quinone reductase subunit D.